A 143-amino-acid chain; its full sequence is Transcriptional regulator MraZ (143 aa).

SpoVT-AbrB domains follow at residues 5-47 and 76-119; these read EFRH…PMKE and ATEC…DEAR.

Belongs to the MraZ family. Forms oligomers.

It is found in the cytoplasm. The protein resides in the nucleoid. The sequence is that of Transcriptional regulator MraZ from Enterococcus hirae.